We begin with the raw amino-acid sequence, 274 residues long: Bis(5'-nucleosyl)-tetraphosphatase, symmetrical (274 aa).

The protein belongs to the Ap4A hydrolase family.

It carries out the reaction P(1),P(4)-bis(5'-adenosyl) tetraphosphate + H2O = 2 ADP + 2 H(+). In terms of biological role, hydrolyzes diadenosine 5',5'''-P1,P4-tetraphosphate to yield ADP. The chain is Bis(5'-nucleosyl)-tetraphosphatase, symmetrical from Buchnera aphidicola subsp. Acyrthosiphon pisum (strain 5A).